Reading from the N-terminus, the 727-residue chain is Glucans biosynthesis glucosyltransferase H (727 aa).

The segment at 17–41 (GSAMPNERPGPMEPQSLSQMPEGFP) is disordered. The next 6 membrane-spanning stretches (helical) occupy residues 58-80 (FFVV…AVFS), 95-117 (FAIN…LLLL), 407-429 (GIMA…MLAL), 457-479 (ALRL…VLLL), 499-521 (VLFE…CGAV), and 572-594 (LLAW…AWTG).

This sequence belongs to the glycosyltransferase 2 family. OpgH subfamily.

The protein localises to the cell inner membrane. It participates in glycan metabolism; osmoregulated periplasmic glucan (OPG) biosynthesis. Its function is as follows. Involved in the biosynthesis of osmoregulated periplasmic glucans (OPGs). This is Glucans biosynthesis glucosyltransferase H from Shewanella oneidensis (strain ATCC 700550 / JCM 31522 / CIP 106686 / LMG 19005 / NCIMB 14063 / MR-1).